A 223-amino-acid polypeptide reads, in one-letter code: Protein Mis18-alpha (223 aa).

Positions 1–30 are disordered; the sequence is MAGTFSLEPCSTSSSCNHQGKRSESSLLEK. Residues 9-18 show a composition bias toward polar residues; it reads PCSTSSSCNH. The segment covering 21-30 has biased composition (basic and acidic residues); sequence KRSESSLLEK. 3 positions are modified to phosphoserine: Ser-33, Ser-36, and Ser-37. The 99-residue stretch at 71 to 169 folds into the Mis18 domain; that stretch reads PLVFLCTRCR…SVEAVESYTL (99 aa). Residues Cys-76, Cys-79, Cys-132, and Cys-135 each contribute to the Zn(2+) site. Residue Lys-153 forms a Glycyl lysine isopeptide (Lys-Gly) (interchain with G-Cter in SUMO2) linkage. Phosphoserine is present on Ser-223.

This sequence belongs to the mis18 family. In terms of assembly, homodimer, and heterodimer with OIP5/MIS18B. Identified in a complex containing MIS18A, OIP5/MIS18B, MIS18BP1, RBBP7 and RBBP4.

Its subcellular location is the nucleus. It is found in the chromosome. The protein localises to the centromere. Required for recruitment of CENPA to centromeres and normal chromosome segregation during mitosis. This chain is Protein Mis18-alpha (Mis18a), found in Rattus norvegicus (Rat).